Consider the following 280-residue polypeptide: Shikimate dehydrogenase (NADP(+)) (280 aa).

Shikimate contacts are provided by residues 18 to 20 (SRS) and Thr65. Residue Lys69 is the Proton acceptor of the active site. Shikimate contacts are provided by Asn90 and Asp105. Residues 130–134 (GAGGA), 154–159 (NRTLAR), and Leu219 contribute to the NADP(+) site. Tyr221 is a shikimate binding site. Gly242 is a binding site for NADP(+).

This sequence belongs to the shikimate dehydrogenase family. Homodimer.

It carries out the reaction shikimate + NADP(+) = 3-dehydroshikimate + NADPH + H(+). Its pathway is metabolic intermediate biosynthesis; chorismate biosynthesis; chorismate from D-erythrose 4-phosphate and phosphoenolpyruvate: step 4/7. Functionally, involved in the biosynthesis of the chorismate, which leads to the biosynthesis of aromatic amino acids. Catalyzes the reversible NADPH linked reduction of 3-dehydroshikimate (DHSA) to yield shikimate (SA). The sequence is that of Shikimate dehydrogenase (NADP(+)) from Mesorhizobium japonicum (strain LMG 29417 / CECT 9101 / MAFF 303099) (Mesorhizobium loti (strain MAFF 303099)).